Consider the following 85-residue polypeptide: NADH-ubiquinone oxidoreductase chain 4L (85 aa).

2 helical membrane-spanning segments follow: residues 21 to 41 (LLVTLLSLEFLILLLFSLLVY) and 51 to 71 (FIFLSVTVCEGALGFSVLVSL).

The protein belongs to the complex I subunit 4L family.

It is found in the mitochondrion membrane. It carries out the reaction a ubiquinone + NADH + 5 H(+)(in) = a ubiquinol + NAD(+) + 4 H(+)(out). Core subunit of the mitochondrial membrane respiratory chain NADH dehydrogenase (Complex I) that is believed to belong to the minimal assembly required for catalysis. Complex I functions in the transfer of electrons from NADH to the respiratory chain. The immediate electron acceptor for the enzyme is believed to be ubiquinone. The chain is NADH-ubiquinone oxidoreductase chain 4L (ND4L) from Artemia franciscana (Brine shrimp).